The following is a 335-amino-acid chain: tRNA N6-adenosine threonylcarbamoyltransferase (335 aa).

Positions 109, 113, and 130 each coordinate a divalent metal cation. Substrate contacts are provided by residues 130-134 (YVSGG), Asp-162, Gly-177, Glu-181, and Asn-266. Residue Asp-294 participates in a divalent metal cation binding.

The protein belongs to the KAE1 / TsaD family. In terms of assembly, component of the EKC/KEOPS complex composed of at least GON7, TP53RK, TPRKB, OSGEP and LAGE3; the whole complex dimerizes. Interacts with PRAME. Requires a divalent metal cation as cofactor. In terms of tissue distribution, widely expressed at low level. Expressed in heart, placenta, liver, kidney, lung, brain, skeletal muscle and pancreas.

It localises to the cytoplasm. It is found in the nucleus. It catalyses the reaction L-threonylcarbamoyladenylate + adenosine(37) in tRNA = N(6)-L-threonylcarbamoyladenosine(37) in tRNA + AMP + H(+). Its function is as follows. Component of the EKC/KEOPS complex that is required for the formation of a threonylcarbamoyl group on adenosine at position 37 (t(6)A37) in tRNAs that read codons beginning with adenine. The complex is probably involved in the transfer of the threonylcarbamoyl moiety of threonylcarbamoyl-AMP (TC-AMP) to the N6 group of A37. OSGEP likely plays a direct catalytic role in this reaction, but requires other protein(s) of the complex to fulfill this activity. This Homo sapiens (Human) protein is tRNA N6-adenosine threonylcarbamoyltransferase.